Consider the following 1308-residue polypeptide: Receptor tyrosine-protein kinase erbB-4 (1308 aa).

The signal sequence occupies residues methionine 1–serine 25. Residues glutamine 26 to proline 651 lie on the Extracellular side of the membrane. Cysteine 29 and cysteine 56 are joined by a disulfide. N-linked (GlcNAc...) asparagine glycosylation is found at asparagine 138, asparagine 174, and asparagine 181. Intrachain disulfides connect cysteine 156–cysteine 186, cysteine 189–cysteine 197, cysteine 193–cysteine 205, cysteine 213–cysteine 221, cysteine 217–cysteine 229, cysteine 230–cysteine 238, cysteine 234–cysteine 246, cysteine 249–cysteine 258, cysteine 262–cysteine 289, cysteine 293–cysteine 304, cysteine 308–cysteine 323, and cysteine 326–cysteine 330. Asparagine 253 carries an N-linked (GlcNAc...) asparagine glycan. Asparagine 358, asparagine 410, asparagine 473, and asparagine 495 each carry an N-linked (GlcNAc...) asparagine glycan. 10 cysteine pairs are disulfide-bonded: cysteine 503–cysteine 512, cysteine 507–cysteine 520, cysteine 523–cysteine 532, cysteine 536–cysteine 552, cysteine 555–cysteine 569, cysteine 559–cysteine 577, cysteine 580–cysteine 589, cysteine 593–cysteine 614, cysteine 617–cysteine 625, and cysteine 621–cysteine 633. Residue asparagine 548 is glycosylated (N-linked (GlcNAc...) asparagine). N-linked (GlcNAc...) asparagine glycosylation is present at asparagine 576. Asparagine 620 carries an N-linked (GlcNAc...) asparagine glycan. The helical transmembrane segment at leucine 652–valine 675 threads the bilayer. The Nuclear localization signal motif lies at arginine 676–arginine 684. Residues arginine 676–valine 1308 lie on the Cytoplasmic side of the membrane. One can recognise a Protein kinase domain in the interval leucine 718–leucine 985. ATP is bound by residues leucine 724 to valine 732, lysine 751, glutamine 797 to methionine 799, and aspartate 843 to asparagine 848. The Proton acceptor role is filled by aspartate 843. 10 positions are modified to phosphotyrosine; by autocatalysis: tyrosine 875, tyrosine 1035, tyrosine 1056, tyrosine 1150, tyrosine 1162, tyrosine 1188, tyrosine 1202, tyrosine 1242, tyrosine 1258, and tyrosine 1284. 2 short sequence motifs (PPxY motif) span residues proline 1032–tyrosine 1035 and proline 1053–tyrosine 1056. The tract at residues proline 1117 to tyrosine 1150 is disordered. The PPxY motif 3 motif lies at proline 1298 to tyrosine 1301. A PDZ-binding motif is present at residues threonine 1306–valine 1308.

It belongs to the protein kinase superfamily. Tyr protein kinase family. EGF receptor subfamily. As to quaternary structure, monomer in the absence of bound ligand. Homodimer or heterodimer with another ERBB family member upon ligand binding, thus forming heterotetramers. Interacts with EGFR and ERBB2. Interacts with CBFA2T3. Interacts with DLG2 (via its PDZ domain), DLG3 (via its PDZ domain), DLG4 (via its PDZ domain) and SNTB2 (via its PDZ domain). Interacts with MUC1. Interacts (via its PPxy motifs) with WWOX. Interacts (via the PPxY motif 3 of isoform JM-A CYT-2) with YAP1 (via the WW domain 1 of isoform 1). Interacts (isoform JM-A CYT-1 and isoform JM-B CYT-1) with WWP1. Interacts (via its intracellular domain) with TRIM28. Interacts (via the intracellular domains of both CYT-1 and CYT-2 isoforms) with KAP1; the interaction does not phosphorylate KAP1 but represses ERBB4-mediated transcriptional activity. Interacts with PRPU, DDX23, MATR3, RBM15, ILF3, KAP1, U5S1, U2SURP, ITCH, HNRNPU, AP2A1, NULC, LEO1, WWP2, IGHG1, HXK1, GRB7 and SRRT. Interacts (phosphorylated isoform JM-A CYT-1 and isoform JM-B CYT-1) with PIK3R1. Interacts with SHC1. Interacts with GRB2. Interacts (soluble intracellular domain) with STAT5A. Interacts (soluble intracellular domain) with BCL2. Interacts (phosphorylated) with STAT1. In terms of processing, isoform JM-A CYT-1 and isoform JM-A CYT-2 are processed by ADAM17. Proteolytic processing in response to ligand or 12-O-tetradecanoylphorbol-13-acetate stimulation results in the production of 120 kDa soluble receptor forms and intermediate membrane-anchored 80 kDa fragments (m80HER4), which are further processed by a presenilin-dependent gamma-secretase to release a cytoplasmic intracellular domain (E4ICD; E4ICD1/s80Cyt1 or E4ICD2/s80Cyt2, depending on the isoform). Membrane-anchored 80 kDa fragments of the processed isoform JM-A CYT-1 are more readily degraded by the proteasome than fragments of isoform JM-A CYT-2, suggesting a prevalence of E4ICD2 over E4ICD1. Isoform JM-B CYT-1 and isoform JM-B CYT-2 lack the ADAM17 cleavage site and are not processed by ADAM17, precluding further processing by gamma-secretase. Post-translationally, autophosphorylated on tyrosine residues in response to ligand binding. Autophosphorylation occurs in trans, i.e. one subunit of the dimeric receptor phosphorylates tyrosine residues on the other subunit. Ligands trigger phosphorylation at specific tyrosine residues, thereby creating binding sites for scaffold proteins and effectors. Constitutively phosphorylated at a basal level when overexpressed in heterologous systems; ligand binding leads to increased phosphorylation. Phosphorylation at Tyr-1035 is important for interaction with STAT1. Phosphorylation at Tyr-1056 is important for interaction with PIK3R1. Phosphorylation at Tyr-1242 is important for interaction with SHC1. Phosphorylation at Tyr-1188 may also contribute to the interaction with SHC1. Isoform JM-A CYT-2 is constitutively phosphorylated on tyrosine residues in a ligand-independent manner. E4ICD2 but not E4ICD1 is phosphorylated on tyrosine residues. Ubiquitinated. During mitosis, the ERBB4 intracellular domain is ubiquitinated by the APC/C complex and targeted to proteasomal degradation. Isoform JM-A CYT-1 and isoform JM-B CYT-1 are ubiquitinated by WWP1. The ERBB4 intracellular domain (E4ICD1) is ubiquitinated, and this involves NEDD4. Expressed at highest levels in brain, heart, kidney, in addition to skeletal muscle, parathyroid, cerebellum, pituitary, spleen, testis and breast. Lower levels in thymus, lung, salivary gland, and pancreas. Isoform JM-A CYT-1 and isoform JM-B CYT-1 are expressed in cerebellum, but only the isoform JM-B is expressed in the heart.

It is found in the cell membrane. It localises to the nucleus. The protein resides in the mitochondrion. It catalyses the reaction L-tyrosyl-[protein] + ATP = O-phospho-L-tyrosyl-[protein] + ADP + H(+). Binding of a cognate ligand leads to dimerization and activation by autophosphorylation on tyrosine residues. In vitro kinase activity is increased by Mg(2+). Inhibited by PD153035, lapatinib, gefitinib (iressa, ZD1839), AG1478 and BIBX1382BS. Functionally, tyrosine-protein kinase that plays an essential role as cell surface receptor for neuregulins and EGF family members and regulates development of the heart, the central nervous system and the mammary gland, gene transcription, cell proliferation, differentiation, migration and apoptosis. Required for normal cardiac muscle differentiation during embryonic development, and for postnatal cardiomyocyte proliferation. Required for normal development of the embryonic central nervous system, especially for normal neural crest cell migration and normal axon guidance. Required for mammary gland differentiation, induction of milk proteins and lactation. Acts as cell-surface receptor for the neuregulins NRG1, NRG2, NRG3 and NRG4 and the EGF family members BTC, EREG and HBEGF. Ligand binding triggers receptor dimerization and autophosphorylation at specific tyrosine residues that then serve as binding sites for scaffold proteins and effectors. Ligand specificity and signaling is modulated by alternative splicing, proteolytic processing, and by the formation of heterodimers with other ERBB family members, thereby creating multiple combinations of intracellular phosphotyrosines that trigger ligand- and context-specific cellular responses. Mediates phosphorylation of SHC1 and activation of the MAP kinases MAPK1/ERK2 and MAPK3/ERK1. Isoform JM-A CYT-1 and isoform JM-B CYT-1 phosphorylate PIK3R1, leading to the activation of phosphatidylinositol 3-kinase and AKT1 and protect cells against apoptosis. Isoform JM-A CYT-1 and isoform JM-B CYT-1 mediate reorganization of the actin cytoskeleton and promote cell migration in response to NRG1. Isoform JM-A CYT-2 and isoform JM-B CYT-2 lack the phosphotyrosine that mediates interaction with PIK3R1, and hence do not phosphorylate PIK3R1, do not protect cells against apoptosis, and do not promote reorganization of the actin cytoskeleton and cell migration. Proteolytic processing of isoform JM-A CYT-1 and isoform JM-A CYT-2 gives rise to the corresponding soluble intracellular domains (4ICD) that translocate to the nucleus, promote nuclear import of STAT5A, activation of STAT5A, mammary epithelium differentiation, cell proliferation and activation of gene expression. The ERBB4 soluble intracellular domains (4ICD) colocalize with STAT5A at the CSN2 promoter to regulate transcription of milk proteins during lactation. The ERBB4 soluble intracellular domains can also translocate to mitochondria and promote apoptosis. The chain is Receptor tyrosine-protein kinase erbB-4 (ERBB4) from Homo sapiens (Human).